Consider the following 665-residue polypeptide: Fructose-1,6-bisphosphatase class 3 (665 aa).

Belongs to the FBPase class 3 family. Mn(2+) is required as a cofactor.

It carries out the reaction beta-D-fructose 1,6-bisphosphate + H2O = beta-D-fructose 6-phosphate + phosphate. The protein operates within carbohydrate biosynthesis; gluconeogenesis. In Alkaliphilus metalliredigens (strain QYMF), this protein is Fructose-1,6-bisphosphatase class 3.